We begin with the raw amino-acid sequence, 87 residues long: uncharacterized protein (87 aa).

This is an uncharacterized protein from Saccharomyces cerevisiae (strain ATCC 204508 / S288c) (Baker's yeast).